The primary structure comprises 101 residues: Integration host factor subunit alpha (101 aa).

Belongs to the bacterial histone-like protein family. Heterodimer of an alpha and a beta chain.

Its function is as follows. This protein is one of the two subunits of integration host factor, a specific DNA-binding protein that functions in genetic recombination as well as in transcriptional and translational control. The sequence is that of Integration host factor subunit alpha from Saccharophagus degradans (strain 2-40 / ATCC 43961 / DSM 17024).